A 239-amino-acid polypeptide reads, in one-letter code: Ribosomal RNA small subunit methyltransferase G (239 aa).

Residues glycine 78, phenylalanine 83, 129–130 (AE), and arginine 148 contribute to the S-adenosyl-L-methionine site.

The protein belongs to the methyltransferase superfamily. RNA methyltransferase RsmG family.

It is found in the cytoplasm. Specifically methylates the N7 position of a guanine in 16S rRNA. The polypeptide is Ribosomal RNA small subunit methyltransferase G (Clostridium perfringens (strain SM101 / Type A)).